The sequence spans 489 residues: CUGBP Elav-like family member 1-A (489 aa).

RRM domains lie at 16 to 99 (IKMF…PADS), 108 to 188 (RKLF…FADT), and 404 to 482 (ANLF…LKRS). The interval 183-210 (VKFADTQKDKEQKRMTQQLQQQMQQLNA) is necessary for oligomerization and EDEN-dependent deadenylation.

It belongs to the CELF/BRUNOL family. Oligomer. Oligomerization is required for RNA-binding and EDEN-dependent deadenylation. In terms of processing, phosphorylated during oocyte maturation and dephosphorylated following egg activation. Dephosphorylation is calcium dependent and correlates with the increase in the activity of EDEN-dependent deadenylation.

It is found in the nucleus. It localises to the cytoplasm. In terms of biological role, RNA-binding protein implicated in the regulation of several post-transcriptional events. May be involved in pre-mRNA alternative splicing, mRNA translation activation and stability. Mediates the rapid and sequence-specific cytoplasmic deadenylation of EDEN-containing maternal mRNAs following fertilization. Binds to AU-rich sequences (AREs) of jun mRNA. Binds to the embryonic deadenylation element (EDEN) motif localized in the 3'-UTR of maternal mRNAs. Binds to RNA containing several repeats of the consensus sequence 5'-UGU-3'. EDEN-dependent deadenylation is enhanced by the presence of an additional cis element composed of three AUU repeats. This is CUGBP Elav-like family member 1-A (cugbp1-a) from Xenopus laevis (African clawed frog).